The following is a 981-amino-acid chain: Beta-glucuronidase (981 aa).

Glutamate 500 functions as the Nucleophile in the catalytic mechanism. Residues asparagine 561, tryptophan 562, isoleucine 563, serine 581, and glutamate 583 each contribute to the Mg(2+) site.

It belongs to the glycosyl hydrolase 2 family.

The protein resides in the periplasm. The catalysed reaction is a beta-D-glucuronoside + H2O = D-glucuronate + an alcohol. Its function is as follows. Beta-glucuronidase involved in ulvan degradation. Ulvan is the main polysaccharide component of the Ulvales (green seaweed) cell wall. It is composed of disaccharide building blocks comprising 3-sulfated rhamnose (Rha3S) linked to D-glucuronic acid (GlcA), L-iduronic acid (IduA), or D-xylose (Xyl). Beta-glucuronidase removes GlcA side chains present on some O2 residues of Rha3S. Can remove the GlcA side chains from polymeric ulvan or from smaller oligomers. The polypeptide is Beta-glucuronidase (Formosa agariphila (strain DSM 15362 / KCTC 12365 / LMG 23005 / KMM 3901 / M-2Alg 35-1)).